A 59-amino-acid polypeptide reads, in one-letter code: Toxin TxpA (59 aa).

Residues 7 to 27 form a helical membrane-spanning segment; the sequence is LMVMIGFANLIGGIMTWVISL.

The protein resides in the cell membrane. Functionally, toxic component of a type I toxin-antitoxin (TA) system. Overexpression of txpA causes cell lysis; the TxpA protein has been suggested to act on the cell membrane or might possibly block cell wall synthesis. Overexpression in E.coli is not toxic. The protein is Toxin TxpA of Bacillus subtilis (strain 168).